A 419-amino-acid polypeptide reads, in one-letter code: eIF5-mimic protein 1 (419 aa).

The tract at residues Met-1–Lys-22 is disordered. Lys-117 bears the N6-acetyllysine mark. In terms of domain architecture, W2 spans Val-248–Glu-415. Phosphoserine occurs at positions 412, 414, and 419.

Belongs to the BZW family. In terms of assembly, interacts with EIF3E, EIF2S2 and EIF3C. In terms of tissue distribution, expressed at high levels in heart, and at lower levels in skeletal muscle, spleen and lung. Expressed at low levels in brain regions where nascent and immature neurons are present.

The protein localises to the cytoplasm. In terms of biological role, translation initiation regulator which represses non-AUG initiated translation and repeat-associated non-AUG (RAN) initiated translation by acting as a competitive inhibitor of eukaryotic translation initiation factor 5 (EIF5) function. Increases the accuracy of translation initiation by impeding EIF5-dependent translation from non-AUG codons by competing with it for interaction with EIF2S2 within the 43S pre-initiation complex (PIC) in an EIF3C-binding dependent manner. This is eIF5-mimic protein 1 (Bzw2) from Rattus norvegicus (Rat).